The primary structure comprises 414 residues: V-set and immunoglobulin domain-containing protein 8 (414 aa).

The N-terminal stretch at methionine 1–alanine 21 is a signal peptide. Ig-like V-type domains are found at residues valine 22–threonine 141 and proline 146–serine 257. The Extracellular segment spans residues valine 22 to glycine 263. Disulfide bonds link cysteine 44–cysteine 126 and cysteine 167–cysteine 239. The chain crosses the membrane as a helical span at residues valine 264 to tryptophan 284. Residues glycine 285–valine 414 are Cytoplasmic-facing.

Its subcellular location is the membrane. The sequence is that of V-set and immunoglobulin domain-containing protein 8 from Homo sapiens (Human).